The sequence spans 445 residues: MKHFEANFDGLVGPTHNYAGLSFGNVASLNNAAATSSPKDAAKQGLKKAKALADLGLVQGMLAPQERPDLHTLRRIGFTGTDAAILNKAAKEAPALLRACCSASSMWTANAATVSPSADTHDGKLHFTPANLVDKLHRSIEPITTGNILQATFNDSRYFKHHQHLPEHTSFGDEGAANHTRLCEQYGHAGVELFVYGQETTNPSAPRPQKFPARQTLEASQAVARLHQLDDDCTVYIQQNPDVIDQGVFHNDVIAVGNQNVLFYHEQAFLNTQAKLTEIKRKFGESAIHFVEVPTSKVAIQDAVKSYLFNTQVVTLPSGEMAIIAPTNCQENPAVFAYLNELVTLDTPIKQVLYFDVKQSMQNGGGPACLRLRVAMNQDEVAAVNQHTLMNDAQFTRLNLWVDKHYRDRLLVEDLADPQLLLESRTALDELTQIMKLGSVYQFQR.

Substrate contacts are provided by residues 19–28 (AGLSFGNVAS), asparagine 110, and 137–138 (HR). The active site involves glutamate 174. Substrate is bound at residue arginine 214. Histidine 250 is a catalytic residue. Aspartate 252 and asparagine 363 together coordinate substrate. The active-site Nucleophile is the cysteine 369.

The protein belongs to the succinylarginine dihydrolase family. As to quaternary structure, homodimer.

It carries out the reaction N(2)-succinyl-L-arginine + 2 H2O + 2 H(+) = N(2)-succinyl-L-ornithine + 2 NH4(+) + CO2. It functions in the pathway amino-acid degradation; L-arginine degradation via AST pathway; L-glutamate and succinate from L-arginine: step 2/5. In terms of biological role, catalyzes the hydrolysis of N(2)-succinylarginine into N(2)-succinylornithine, ammonia and CO(2). This is N-succinylarginine dihydrolase from Shewanella halifaxensis (strain HAW-EB4).